We begin with the raw amino-acid sequence, 873 residues long: Protein translocase subunit SecA (873 aa).

Residues Gln-85, 103-107, and Asp-492 contribute to the ATP site; that span reads GEGKT. Positions 835–856 are enriched in basic and acidic residues; sequence RYAEEEGKQPIRKENQIGRNDD. The tract at residues 835–873 is disordered; the sequence is RYAEEEGKQPIRKENQIGRNDDCPCGSGKKYKKCCGKNA. Residues Cys-857, Cys-859, Cys-868, and Cys-869 each contribute to the Zn(2+) site. The segment covering 863–873 has biased composition (basic residues); the sequence is KKYKKCCGKNA.

Belongs to the SecA family. As to quaternary structure, monomer and homodimer. Part of the essential Sec protein translocation apparatus which comprises SecA, SecYEG and auxiliary proteins SecDF. Other proteins may also be involved. Requires Zn(2+) as cofactor.

The protein localises to the cell membrane. It is found in the cytoplasm. It carries out the reaction ATP + H2O + cellular proteinSide 1 = ADP + phosphate + cellular proteinSide 2.. In terms of biological role, part of the Sec protein translocase complex. Interacts with the SecYEG preprotein conducting channel. Has a central role in coupling the hydrolysis of ATP to the transfer of proteins into and across the cell membrane, serving as an ATP-driven molecular motor driving the stepwise translocation of polypeptide chains across the membrane. This chain is Protein translocase subunit SecA, found in Desulforamulus reducens (strain ATCC BAA-1160 / DSM 100696 / MI-1) (Desulfotomaculum reducens).